The chain runs to 623 residues: Phosphoenolpyruvate carboxykinase [GTP] (623 aa).

Substrate is bound by residues R86 and Y220–G222. The Mn(2+) site is built by K229 and H248. Position 270 (S270) interacts with substrate. Position 271–276 (M271–S276) interacts with GTP. Residue C272 is part of the active site. D289 contributes to the Mn(2+) binding site. N384–R386 is a binding site for substrate. R386 and R418 together coordinate GTP.

The protein belongs to the phosphoenolpyruvate carboxykinase [GTP] family. Homotetramer. Requires Mn(2+) as cofactor.

The protein resides in the cytoplasm. The catalysed reaction is oxaloacetate + GTP = phosphoenolpyruvate + GDP + CO2. It functions in the pathway carbohydrate biosynthesis; gluconeogenesis. In terms of biological role, involved in the gluconeogenesis. Catalyzes the conversion of oxaloacetate (OAA) to phosphoenolpyruvate (PEP), the rate-limiting step in the metabolic pathway that produces glucose from lactate and other precursors derived from the citric acid cycle. This Thermococcus kodakarensis (strain ATCC BAA-918 / JCM 12380 / KOD1) (Pyrococcus kodakaraensis (strain KOD1)) protein is Phosphoenolpyruvate carboxykinase [GTP] (pckG).